Here is a 141-residue protein sequence, read N- to C-terminus: Subtilase cytotoxin subunit B (141 aa).

The N-terminal stretch at 1–23 is a signal peptide; sequence MTIKRFFVCAGIMGCLSLNPAMA. Residues 33–35 and Gln-59 contribute to the N-glycoloyl-alpha-neuraminate site; that span reads MFS. The segment at 89–94 is hydrophobic patch important for binding to SubA; sequence YFYTTG. Tyr-101 is a binding site for N-glycoloyl-alpha-neuraminate.

As to quaternary structure, forms a complex with SubA with the stoichiometry SubA1:SubB5 (called SubAB5). Each SubB subunit makes different contacts with the single SubA subunit. This subunit alone forms pentamers.

The protein resides in the secreted. The protein localises to the host cytoplasm. Its subcellular location is the host cytosol. It localises to the host endoplasmic reticulum lumen. Receptor-binding subunit of subtilase cytotoxin SubAB5. Required for receptor-binding and thus correct trafficking in the host cell. Has specificity for host glycans terminating in the sialic acid N-glycolyl-alpha-neuraminic acid (Neu5Gc); each subunit in the SubB pentamer binds one Neu5Gc. The protease subunit (SubA) cleaves host BiP/HSPA5, inducing the host endoplasmic reticulum stress response and eventual cell death. Culture supernatant of E.coli expressing both subA and subB are toxic for Vero cells (African green monkey kidney cell line), Chinese hamster ovary cells and Hct-8 cells (human colonic epithelial cell line); the subunits are not toxic individually. Purified SubAB5 is highly toxic, &lt;0.1 pg is able to kill at least 50% of 30'000 Vero cells in a microtiter plate assay after 3 days; no cytotoxicity is seen at 24 hours. Preabsorption with cells expressing a ganglioside GM2 mimic reduced cytotoxicity of SubAB5 by 93% in the Vero cytotoxicity assay. Intraperitoneal injection of 200 ng of purified SubAB5 kills mice; the higher the dose the faster the mice die. Animals injected with purified SubAB5 have microvascular thrombi in the brain and other organs, including the renal tubules and glomeruli. Mice fed E.coli cells expressing cloned SubAB5 experience drastic weight loss and appear ill and lethargic. SubB alone at 2.5 ug/ml causes vacuolation of Vero cells, which requires the V-type ATPase proton pump; treated cells die. Protein synthesis in Vero cells is transiently inhibited by SubAB5; both subunits are required for this effect. Inhibition of protein synthesis is prevented by brefeldin A; cells are arrested in the G1 phase. SubAB5 at 100 ng/ml induced caspase-dependent apoptosis in Vero cells through mitochondrial membrane damage. This is Subtilase cytotoxin subunit B from Escherichia coli.